A 365-amino-acid polypeptide reads, in one-letter code: DNA replication and repair protein RecF (365 aa).

30 to 37 (GLNAQGKT) serves as a coordination point for ATP.

It belongs to the RecF family.

The protein resides in the cytoplasm. In terms of biological role, the RecF protein is involved in DNA metabolism; it is required for DNA replication and normal SOS inducibility. RecF binds preferentially to single-stranded, linear DNA. It also seems to bind ATP. The sequence is that of DNA replication and repair protein RecF from Chlamydia trachomatis serovar L2b (strain UCH-1/proctitis).